Consider the following 379-residue polypeptide: S-(hydroxymethyl)glutathione dehydrogenase (379 aa).

Cys-47 serves as a coordination point for Zn(2+). Residue His-48 coordinates NAD(+). Zn(2+)-binding residues include His-69, Glu-70, Cys-99, Cys-102, Cys-105, Cys-113, and Cys-176. NAD(+)-binding positions include 201–206 (GAGCIG), Asp-225, and 296–298 (IGV).

The protein belongs to the zinc-containing alcohol dehydrogenase family. Class-III subfamily. The cofactor is Zn(2+).

The catalysed reaction is a primary alcohol + NAD(+) = an aldehyde + NADH + H(+). It catalyses the reaction a secondary alcohol + NAD(+) = a ketone + NADH + H(+). The enzyme catalyses S-(hydroxymethyl)glutathione + NADP(+) = S-formylglutathione + NADPH + H(+). It carries out the reaction S-(hydroxymethyl)glutathione + NAD(+) = S-formylglutathione + NADH + H(+). The catalysed reaction is S-nitrosoglutathione + NADH + H(+) = S-(hydroxysulfenamide)glutathione + NAD(+). Functionally, oxidizes long-chain alcohols and, in the presence of glutathione, is able to oxidize formaldehyde. Also acts as a S-nitroso-glutathione reductase by catalyzing the NADH-dependent reduction of S-nitrosoglutathione, thereby regulating protein S-nitrosylation. This chain is S-(hydroxymethyl)glutathione dehydrogenase (FLD1), found in Komagataella pastoris (Yeast).